Consider the following 186-residue polypeptide: RNA polymerase sigma factor NccH (186 aa).

Residues 49 to 62 (DIVQDTFIAAWHAL) carry the Polymerase core binding motif. A DNA-binding region (H-T-H motif) is located at residues 152-171 (HPEAAMALGTSAKAVESRVA).

Belongs to the sigma-70 factor family. ECF subfamily.

Its function is as follows. Sigma factors are initiation factors that promote the attachment of RNA polymerase to specific initiation sites and are then released. This sigma factor regulates the genes for a membrane-located efflux system that confers resistance to nickel, cobalt and cadmium. The sequence is that of RNA polymerase sigma factor NccH (nccH) from Alcaligenes xylosoxydans xylosoxydans (Achromobacter xylosoxidans).